Here is a 117-residue protein sequence, read N- to C-terminus: Large ribosomal subunit protein bL17 (117 aa).

It belongs to the bacterial ribosomal protein bL17 family. As to quaternary structure, part of the 50S ribosomal subunit. Contacts protein L32.

This Dehalococcoides mccartyi (strain ATCC BAA-2100 / JCM 16839 / KCTC 5957 / BAV1) protein is Large ribosomal subunit protein bL17.